The sequence spans 269 residues: Ribonuclease HII (269 aa).

Residues 61 to 250 enclose the RNase H type-2 domain; sequence RLVCGVDEAG…VRKMLSPGLE (190 aa). Aspartate 67, glutamate 68, and aspartate 158 together coordinate a divalent metal cation.

This sequence belongs to the RNase HII family. The cofactor is Mn(2+). Mg(2+) serves as cofactor.

It is found in the cytoplasm. The catalysed reaction is Endonucleolytic cleavage to 5'-phosphomonoester.. In terms of biological role, endonuclease that specifically degrades the RNA of RNA-DNA hybrids. The sequence is that of Ribonuclease HII from Parvibaculum lavamentivorans (strain DS-1 / DSM 13023 / NCIMB 13966).